A 468-amino-acid chain; its full sequence is 6-phosphogluconate dehydrogenase, decarboxylating (468 aa).

NADP(+) contacts are provided by residues 10 to 15, 33 to 35, 74 to 76, and N102; these read GMAVMG, NRS, and VKA. Residues N102 and 128–130 each bind substrate; that span reads SGG. K183 (proton acceptor) is an active-site residue. 186 to 187 contacts substrate; that stretch reads HN. E190 serves as the catalytic Proton donor. Substrate contacts are provided by Y191, K260, R287, R445, and H451.

The protein belongs to the 6-phosphogluconate dehydrogenase family. As to quaternary structure, homodimer.

It catalyses the reaction 6-phospho-D-gluconate + NADP(+) = D-ribulose 5-phosphate + CO2 + NADPH. Its pathway is carbohydrate degradation; pentose phosphate pathway; D-ribulose 5-phosphate from D-glucose 6-phosphate (oxidative stage): step 3/3. Functionally, catalyzes the oxidative decarboxylation of 6-phosphogluconate to ribulose 5-phosphate and CO(2), with concomitant reduction of NADP to NADPH. This is 6-phosphogluconate dehydrogenase, decarboxylating (gnd) from Escherichia coli.